The primary structure comprises 293 residues: Lysosomal amino acid transporter 1 homolog (293 aa).

Over 1–37 (MVWRTLVASNFSTCPNGSIQWIWDVFGECAQDGWDEA) the chain is Lumenal. N-linked (GlcNAc...) asparagine glycosylation is present at N10. The region spanning 34–100 (WDEASVALGL…LADQLPLQTY (67 aa)) is the PQ-loop 1 domain. A helical transmembrane segment spans residues 38 to 58 (SVALGLVSIFCFAASTFPQYI). Residues 59–71 (KACKTGNMDQALS) are Cytoplasmic-facing. The chain crosses the membrane as a helical span at residues 72–92 (LWFLLGWIGGDSCNLIGSFLA). Residues 93–96 (DQLP) lie on the Lumenal side of the membrane. Residues 97 to 117 (LQTYTAVYYVLADLLMLTLYF) traverse the membrane as a helical segment. Residues 118 to 126 (HYKFKKQPS) lie on the Cytoplasmic side of the membrane. A helical membrane pass occupies residues 127–147 (LLSAPINSVLLFILGTVCITP). Over 148–182 (LLSSTDPVAVPREGFRGRTLLSVEPGNKPFTKKEV) the chain is Lumenal. The chain crosses the membrane as a helical span at residues 183–203 (VGFVIGSASSVLYLLSRLPQI). The region spanning 191–243 (SSVLYLLSRLPQIRTNFVRQSTQGISYSLFALVMLGNTLYGLSVLLKNPEVGQ) is the PQ-loop 2 domain. The Cytoplasmic segment spans residues 204-214 (RTNFVRQSTQG). Residues 215-235 (ISYSLFALVMLGNTLYGLSVL) form a helical membrane-spanning segment. Residues 236 to 254 (LKNPEVGQSEGSYLLHHLP) are Lumenal-facing. The helical transmembrane segment at 255–275 (WLVGSLGVLLLDTIISIQFLV) threads the bilayer. Over 276 to 293 (YRSHDADAASEREPLLPS) the chain is Cytoplasmic. Positions 290 to 291 (LL) match the Di-leucine motif motif.

It belongs to the laat-1 family.

The protein localises to the lysosome membrane. Its function is as follows. Amino acid transporter that specifically mediates the pH-dependent export of the cationic amino acids arginine, histidine and lysine from lysosomes. The protein is Lysosomal amino acid transporter 1 homolog (Slc66a1) of Rattus norvegicus (Rat).